A 90-amino-acid chain; its full sequence is Small ribosomal subunit protein bS18 (90 aa).

Belongs to the bacterial ribosomal protein bS18 family. As to quaternary structure, part of the 30S ribosomal subunit. Forms a tight heterodimer with protein bS6.

Binds as a heterodimer with protein bS6 to the central domain of the 16S rRNA, where it helps stabilize the platform of the 30S subunit. The sequence is that of Small ribosomal subunit protein bS18 from Bacteroides thetaiotaomicron (strain ATCC 29148 / DSM 2079 / JCM 5827 / CCUG 10774 / NCTC 10582 / VPI-5482 / E50).